We begin with the raw amino-acid sequence, 424 residues long: Transcription regulator spe-44 (424 aa).

Residues 65–150 enclose the SAND domain; it reads PLQITIPEGD…RTHMEAMTID (86 aa). Disordered stretches follow at residues 178–228 and 371–394; these read ARKS…KPRQ and EHSVKYQPRTSSSSQESLHTAREF. Residues 192-210 show a composition bias toward basic and acidic residues; sequence YEIENEMAGKEADNDDNRK. Positions 378 to 388 are enriched in polar residues; that stretch reads PRTSSSSQESL.

The protein resides in the chromosome. It localises to the nucleus. Transcription factor which controls spermatogenesis and sperm cell fate by regulation of sperm gene expression. The chain is Transcription regulator spe-44 from Caenorhabditis elegans.